A 901-amino-acid polypeptide reads, in one-letter code: Protein translocase subunit SecA (901 aa).

ATP-binding positions include Q87, 105 to 109, and D512; that span reads GEGKT. The segment at 852–901 is disordered; it reads AQMQQLSHQDDDSAAAAALAAQTGDRKVGRNDPCPCGSGKKYKQCHGRLS. Zn(2+) contacts are provided by C885, C887, C896, and H897. The segment covering 891 to 901 has biased composition (basic residues); sequence KKYKQCHGRLS.

Belongs to the SecA family. Monomer and homodimer. Part of the essential Sec protein translocation apparatus which comprises SecA, SecYEG and auxiliary proteins SecDF-YajC and YidC. The cofactor is Zn(2+).

The protein localises to the cell inner membrane. The protein resides in the cytoplasm. The enzyme catalyses ATP + H2O + cellular proteinSide 1 = ADP + phosphate + cellular proteinSide 2.. In terms of biological role, part of the Sec protein translocase complex. Interacts with the SecYEG preprotein conducting channel. Has a central role in coupling the hydrolysis of ATP to the transfer of proteins into and across the cell membrane, serving both as a receptor for the preprotein-SecB complex and as an ATP-driven molecular motor driving the stepwise translocation of polypeptide chains across the membrane. The protein is Protein translocase subunit SecA of Citrobacter koseri (strain ATCC BAA-895 / CDC 4225-83 / SGSC4696).